The chain runs to 452 residues: Ribosomal protein uS12 methylthiotransferase RimO (452 aa).

One can recognise an MTTase N-terminal domain in the interval Pro-8–Pro-123. 6 residues coordinate [4Fe-4S] cluster: Cys-17, Cys-53, Cys-82, Cys-154, Cys-158, and Cys-161. In terms of domain architecture, Radical SAM core spans Leu-140–Arg-381. Residues Gln-384–Ile-452 enclose the TRAM domain.

It belongs to the methylthiotransferase family. RimO subfamily. [4Fe-4S] cluster is required as a cofactor.

Its subcellular location is the cytoplasm. The enzyme catalyses L-aspartate(89)-[ribosomal protein uS12]-hydrogen + (sulfur carrier)-SH + AH2 + 2 S-adenosyl-L-methionine = 3-methylsulfanyl-L-aspartate(89)-[ribosomal protein uS12]-hydrogen + (sulfur carrier)-H + 5'-deoxyadenosine + L-methionine + A + S-adenosyl-L-homocysteine + 2 H(+). Catalyzes the methylthiolation of an aspartic acid residue of ribosomal protein uS12. The protein is Ribosomal protein uS12 methylthiotransferase RimO of Cupriavidus pinatubonensis (strain JMP 134 / LMG 1197) (Cupriavidus necator (strain JMP 134)).